The following is a 400-amino-acid chain: tRNA(Ile)-lysidine synthase (400 aa).

An ATP-binding site is contributed by 25 to 30 (SGGVDS).

This sequence belongs to the tRNA(Ile)-lysidine synthase family.

The protein resides in the cytoplasm. It carries out the reaction cytidine(34) in tRNA(Ile2) + L-lysine + ATP = lysidine(34) in tRNA(Ile2) + AMP + diphosphate + H(+). In terms of biological role, ligates lysine onto the cytidine present at position 34 of the AUA codon-specific tRNA(Ile) that contains the anticodon CAU, in an ATP-dependent manner. Cytidine is converted to lysidine, thus changing the amino acid specificity of the tRNA from methionine to isoleucine. This is tRNA(Ile)-lysidine synthase from Francisella philomiragia subsp. philomiragia (strain ATCC 25017 / CCUG 19701 / FSC 153 / O#319-036).